The primary structure comprises 473 residues: Glutamate--tRNA ligase 1 (473 aa).

Residues 10–20 (PSPTGFLHIGG) carry the 'HIGH' region motif. A 'KMSKS' region motif is present at residues 252-256 (KLSKR). K255 is a binding site for ATP.

The protein belongs to the class-I aminoacyl-tRNA synthetase family. Glutamate--tRNA ligase type 1 subfamily. In terms of assembly, monomer.

The protein resides in the cytoplasm. The enzyme catalyses tRNA(Glu) + L-glutamate + ATP = L-glutamyl-tRNA(Glu) + AMP + diphosphate. Its function is as follows. Catalyzes the attachment of glutamate to tRNA(Glu) in a two-step reaction: glutamate is first activated by ATP to form Glu-AMP and then transferred to the acceptor end of tRNA(Glu). This chain is Glutamate--tRNA ligase 1, found in Wolbachia pipientis wMel.